A 211-amino-acid chain; its full sequence is ATP phosphoribosyltransferase (211 aa).

Belongs to the ATP phosphoribosyltransferase family. Short subfamily. In terms of assembly, heteromultimer composed of HisG and HisZ subunits.

It is found in the cytoplasm. It catalyses the reaction 1-(5-phospho-beta-D-ribosyl)-ATP + diphosphate = 5-phospho-alpha-D-ribose 1-diphosphate + ATP. It participates in amino-acid biosynthesis; L-histidine biosynthesis; L-histidine from 5-phospho-alpha-D-ribose 1-diphosphate: step 1/9. Its function is as follows. Catalyzes the condensation of ATP and 5-phosphoribose 1-diphosphate to form N'-(5'-phosphoribosyl)-ATP (PR-ATP). Has a crucial role in the pathway because the rate of histidine biosynthesis seems to be controlled primarily by regulation of HisG enzymatic activity. The protein is ATP phosphoribosyltransferase of Ectopseudomonas mendocina (strain ymp) (Pseudomonas mendocina).